The primary structure comprises 153 residues: Phosphoribosyl-AMP cyclohydrolase (153 aa).

Asp93 contacts Mg(2+). Residue Cys94 participates in Zn(2+) binding. Positions 95 and 97 each coordinate Mg(2+). Zn(2+) contacts are provided by Cys112 and Cys119.

The protein belongs to the PRA-CH family. In terms of assembly, homodimer. Mg(2+) serves as cofactor. The cofactor is Zn(2+).

Its subcellular location is the cytoplasm. The catalysed reaction is 1-(5-phospho-beta-D-ribosyl)-5'-AMP + H2O = 1-(5-phospho-beta-D-ribosyl)-5-[(5-phospho-beta-D-ribosylamino)methylideneamino]imidazole-4-carboxamide. The protein operates within amino-acid biosynthesis; L-histidine biosynthesis; L-histidine from 5-phospho-alpha-D-ribose 1-diphosphate: step 3/9. Its function is as follows. Catalyzes the hydrolysis of the adenine ring of phosphoribosyl-AMP. The sequence is that of Phosphoribosyl-AMP cyclohydrolase from Mesorhizobium japonicum (strain LMG 29417 / CECT 9101 / MAFF 303099) (Mesorhizobium loti (strain MAFF 303099)).